Consider the following 910-residue polypeptide: Myelin regulatory factor-like protein (910 aa).

Residues 142 to 405 (GCSYPQQPLC…SNPGQFENDS (264 aa)) constitute a DNA-binding region (NDT80). The disordered stretch occupies residues 189–208 (RSRSSEVQDPDSEGQNRMPT). The 109-residue stretch at 451-559 (SDSRAKQNIQ…KLTNNLEERI (109 aa)) folds into the Peptidase S74 domain. A coiled-coil region spans residues 543–575 (GAVKQLCKLTNNLEERIEELEIWNRKLARLKRL). A helical transmembrane segment spans residues 628–648 (LVITLIAVMAFCALTIVALYI). The disordered stretch occupies residues 661–682 (LPPSNITSSQEPALLPTASSSA). Over residues 663–682 (PSNITSSQEPALLPTASSSA) the composition is skewed to polar residues.

Belongs to the MRF family.

It is found in the membrane. The chain is Myelin regulatory factor-like protein (MYRFL) from Homo sapiens (Human).